We begin with the raw amino-acid sequence, 2919 residues long: Cadherin EGF LAG seven-pass G-type receptor 2 (2919 aa).

Positions 1–31 (MRSRAASAPLPTPLLPLLLLLLLLPPSPLLG) are cleaved as a signal peptide. At 32–2380 (DQVGPCRSLG…GEILPLKTLT (2349 aa)) the chain is on the extracellular side. The segment at 156-194 (LRAGEGSPEESLGGRRKRNVNTAPQFQPPSYQATVPENQ) is disordered. The span at 175-194 (VNTAPQFQPPSYQATVPENQ) shows a compositional bias: polar residues. 9 Cadherin domains span residues 182 to 289 (QPPS…DPVF), 290 to 399 (EQQE…APQF), 400 to 505 (SEKR…APIF), 506 to 610 (VSTP…NPTF), 611 to 712 (TQPE…RPVF), 713 to 815 (QSSH…APQF), 816 to 921 (LRDS…PPVF), 922 to 1023 (EQDE…PPVL), and 1028 to 1146 (ILFN…SPLL). 3 N-linked (GlcNAc...) asparagine glycosylation sites follow: asparagine 486, asparagine 557, and asparagine 701. Residues asparagine 1036, asparagine 1076, asparagine 1182, and asparagine 1212 are each glycosylated (N-linked (GlcNAc...) asparagine). The 59-residue stretch at 1228–1286 (DDNICLREPCENYMRCVSVLRFDSSAPFIASSSVLFRPIHPVGGLRCRCPPGFTGDYCE) folds into the EGF-like 1; atypical domain. The EGF-like 2; calcium-binding domain occupies 1288-1318 (EVDLCYSRPCGPHGRCRSREGGYTCLCLDGY). 6 disulfide bridges follow: cysteine 1292/cysteine 1303, cysteine 1297/cysteine 1312, cysteine 1314/cysteine 1323, cysteine 1332/cysteine 1343, cysteine 1337/cysteine 1353, and cysteine 1355/cysteine 1365. The 39-residue stretch at 1328–1366 (HSGRCTPGVCKNGGTCVNLLVGGFKCDCPSGDFEKPFCQ) folds into the EGF-like 3; calcium-binding domain. The Laminin G-like 1 domain occupies 1367-1571 (VTTRSFPARS…IANNGTVPGC (205 aa)). Asparagine 1501 and asparagine 1565 each carry an N-linked (GlcNAc...) asparagine glycan. Disulfide bonds link cysteine 1545-cysteine 1571, cysteine 1578-cysteine 1589, cysteine 1583-cysteine 1598, and cysteine 1600-cysteine 1609. One can recognise an EGF-like 4; calcium-binding domain in the interval 1574–1610 (KKIVCDSSICHNGGTCVNQWNAFSCECPLGFGGKSCA). A (3R)-3-hydroxyasparagine modification is found at asparagine 1591. The 178-residue stretch at 1614-1791 (ANPQRFLGSS…GESINVEPGC (178 aa)) folds into the Laminin G-like 2 domain. A glycan (N-linked (GlcNAc...) asparagine) is linked at asparagine 1741. The region spanning 1787–1829 (VEPGCSWPDPCDSNPCPTNSYCSNDWDSYSCSCVLGYYGDNCT) is the EGF-like 5; calcium-binding domain. 13 cysteine pairs are disulfide-bonded: cysteine 1791–cysteine 1802, cysteine 1797–cysteine 1817, cysteine 1819–cysteine 1828, cysteine 1832–cysteine 1843, cysteine 1837–cysteine 1855, cysteine 1857–cysteine 1866, cysteine 1887–cysteine 1899, cysteine 1889–cysteine 1906, cysteine 1908–cysteine 1921, cysteine 1924–cysteine 1936, cysteine 1926–cysteine 1943, cysteine 1945–cysteine 1954, and cysteine 1957–cysteine 1969. N-linked (GlcNAc...) asparagine glycosylation is present at asparagine 1827. Residues 1830-1867 (NVCDLNPCEHQSVCTRKPNTPHGYICECLPNYLGPYCE) form the EGF-like 6; calcium-binding domain. In terms of domain architecture, EGF-like 7; calcium-binding spans 1883 to 1922 (TCGPCNCDVSKGFDPDCNKTSGECHCKENHYRPPGSPTCL). Residue asparagine 1900 is glycosylated (N-linked (GlcNAc...) asparagine). The Laminin EGF-like domain occupies 1924-1971 (CDCYPTGSLSRVCDPEDGQCPCKPGVIGRQCDRCDNPFAEVTTNGCEV). Residues asparagine 2024, asparagine 2043, and asparagine 2061 are each glycosylated (N-linked (GlcNAc...) asparagine). Residues 2199 to 2369 (ETTVILPESV…AVLMDMSRRE (171 aa)) enclose the GAIN-B domain. The segment at 2216–2241 (VRSAGPGEAQETEELARRQRRHPELS) is disordered. 2 disulfides stabilise this stretch: cysteine 2319–cysteine 2351 and cysteine 2339–cysteine 2353. The interval 2319–2369 (CVFWNHSILVSGTGGWSARGCEVVFRNESHVSCQCNHMTSFAVLMDMSRRE) is GPS. N-linked (GlcNAc...) asparagine glycans are attached at residues asparagine 2323 and asparagine 2345. The helical transmembrane segment at 2381–2401 (YVALGVTLAALMLTFLFLTLL) threads the bilayer. The Cytoplasmic portion of the chain corresponds to 2402-2413 (RALRSNQHGIRR). A helical membrane pass occupies residues 2414–2433 (NLTAALGLAQLVFLLGINQA). At 2434–2438 (DLPFA) the chain is on the extracellular side. The chain crosses the membrane as a helical span at residues 2439–2459 (CTVIAILLHFLYLCTFSWALL). The Cytoplasmic portion of the chain corresponds to 2460 to 2480 (EALHLYRALTEVRDVNASPMR). Residues 2481–2501 (FYYMLGWGVPAFITGLAVGLD) form a helical membrane-spanning segment. Residues 2502-2518 (PEGYGNPDFCWLSVYDT) are Extracellular-facing. Residues 2519 to 2539 (LIWSFAGPVAFAVSMSVFLYI) traverse the membrane as a helical segment. At 2540–2563 (LSARASCAAQRQGFEKKGPVSGLR) the chain is on the cytoplasmic side. The helical transmembrane segment at 2564 to 2584 (SSFTVLLLLSATWLLALLSVN) threads the bilayer. At 2585–2591 (SDTLLFH) the chain is on the extracellular side. Residues 2592 to 2612 (YLFAACNCVQGPFIFLSYVVL) form a helical membrane-spanning segment. Topologically, residues 2613–2919 (SKEVRKALKF…SEFLFFNFLH (307 aa)) are cytoplasmic. Positions 2690–2884 (LNPGQVPPGL…PPRPPPRQSL (195 aa)) are disordered. Over residues 2718-2730 (TDSDSDLSLEDDQ) the composition is skewed to acidic residues. The segment covering 2791–2800 (GTTTKENSGS) has biased composition (polar residues). The segment covering 2803–2815 (LEERPRENGDALT) has biased composition (basic and acidic residues). The segment covering 2857 to 2868 (GTGSSRGSSISE) has biased composition (low complexity).

Belongs to the G-protein coupled receptor 2 family. LN-TM7 subfamily. Heterodimer of 2 chains generated by proteolytic processing; the large extracellular N-terminal fragment and the membrane-bound C-terminal fragment predominantly remain associated and non-covalently linked. In terms of processing, the iron and 2-oxoglutarate dependent 3-hydroxylation of aspartate and asparagine is (R) stereospecific within EGF domains. Autoproteolytically processed at the GPS region of the GAIN-B domain; this cleavage modulates receptor activity. In terms of tissue distribution, expressed in the CNS and in the eye.

Its subcellular location is the cell membrane. In terms of biological role, receptor that may have an important role in cell/cell signaling during nervous system formation. This Mus musculus (Mouse) protein is Cadherin EGF LAG seven-pass G-type receptor 2.